The sequence spans 256 residues: Hypodermin-A (256 aa).

A signal peptide spans 1–22; that stretch reads MLKFVILLCSIAYVFGAVVPLG. Positions 23–30 are cleaved as a propeptide — activation peptide; that stretch reads MLSQSDGR. Residues 31–254 form the Peptidase S1 domain; sequence IVGGVESKIE…VRSLIVSNAE (224 aa). Cysteines 56 and 72 form a disulfide. Catalysis depends on charge relay system residues His-71 and Asp-116. 2 disulfides stabilise this stretch: Cys-180–Cys-197 and Cys-206–Cys-230. The active-site Charge relay system is Ser-210.

It belongs to the peptidase S1 family.

The protein localises to the secreted. Its function is as follows. Specificity, limited to carboxyl side of arginine residue in B-chain of insulin. This chain is Hypodermin-A, found in Hypoderma lineatum (Early cattle grub).